The sequence spans 294 residues: Protease HtpX (294 aa).

The next 2 helical transmembrane spans lie at I4 to I24 and F33 to L53. H139 contacts Zn(2+). The active site involves E140. Position 143 (H143) interacts with Zn(2+). 2 consecutive transmembrane segments (helical) span residues G147–S167 and F197–W217. Zn(2+) is bound at residue E223.

It belongs to the peptidase M48B family. Requires Zn(2+) as cofactor.

It localises to the cell membrane. This chain is Protease HtpX, found in Wigglesworthia glossinidia brevipalpis.